Reading from the N-terminus, the 534-residue chain is Cytokinin dehydrogenase 5 (534 aa).

The first 20 residues, 1–20 (MAWCLVFMVFLIYCLISTVG), serve as a signal peptide directing secretion. In terms of domain architecture, FAD-binding PCMH-type spans 59-243 (TSAEPLAVFH…TRARIALEPA (185 aa)). Residues Ala93, Gly95, and Gly97 each contribute to the FAD site. A Pros-8alpha-FAD histidine modification is found at His98. FAD contacts are provided by Ser99 and Gln103. Residue Asn152 is glycosylated (N-linked (GlcNAc...) asparagine). 5 residues coordinate FAD: Asp167, Ser172, Ser178, Ile182, and Ile233. An N-linked (GlcNAc...) asparagine glycan is attached at Asn256. FAD contacts are provided by Tyr484 and Gln522.

This sequence belongs to the oxygen-dependent FAD-linked oxidoreductase family. Monomer. Requires FAD as cofactor. Expressed in inflorescence meristems.

It localises to the secreted. The protein localises to the extracellular space. The catalysed reaction is N(6)-dimethylallyladenine + A + H2O = 3-methyl-2-butenal + adenine + AH2. Functionally, catalyzes the oxidation of cytokinins, a family of N(6)-substituted adenine derivatives that are plant hormones, where the substituent is an isopentenyl group. This Oryza sativa subsp. japonica (Rice) protein is Cytokinin dehydrogenase 5 (CKX5).